A 395-amino-acid chain; its full sequence is 1-deoxy-D-xylulose 5-phosphate reductoisomerase (395 aa).

NADPH is bound by residues threonine 10, glycine 11, serine 12, isoleucine 13, asparagine 38, and asparagine 123. A 1-deoxy-D-xylulose 5-phosphate-binding site is contributed by lysine 124. Glutamate 125 lines the NADPH pocket. Aspartate 149 lines the Mn(2+) pocket. Residues serine 150, glutamate 151, serine 185, and histidine 208 each coordinate 1-deoxy-D-xylulose 5-phosphate. A Mn(2+)-binding site is contributed by glutamate 151. An NADPH-binding site is contributed by glycine 214. 1-deoxy-D-xylulose 5-phosphate-binding residues include serine 221, asparagine 226, lysine 227, and glutamate 230. Glutamate 230 provides a ligand contact to Mn(2+).

The protein belongs to the DXR family. Mg(2+) serves as cofactor. The cofactor is Mn(2+).

It carries out the reaction 2-C-methyl-D-erythritol 4-phosphate + NADP(+) = 1-deoxy-D-xylulose 5-phosphate + NADPH + H(+). It participates in isoprenoid biosynthesis; isopentenyl diphosphate biosynthesis via DXP pathway; isopentenyl diphosphate from 1-deoxy-D-xylulose 5-phosphate: step 1/6. In terms of biological role, catalyzes the NADPH-dependent rearrangement and reduction of 1-deoxy-D-xylulose-5-phosphate (DXP) to 2-C-methyl-D-erythritol 4-phosphate (MEP). The chain is 1-deoxy-D-xylulose 5-phosphate reductoisomerase from Shewanella woodyi (strain ATCC 51908 / MS32).